Consider the following 290-residue polypeptide: Protein-glutamine deamidase Cif (290 aa).

A disordered region spans residues 1–26 (MKISPNTISPSQSDPRMSTNVSQRSR). Residues Cys-117, His-173, and Gln-193 contribute to the active site.

This sequence belongs to the Cif family.

It localises to the secreted. Its subcellular location is the host nucleus. The catalysed reaction is L-glutaminyl-[protein] + H2O = L-glutamyl-[protein] + NH4(+). Protein-glutamine deamidase effector that inhibits the host cell cycle and other key cellular processes such as the actin network and programmed-cell death. Acts by mediating the side chain deamidation of 'Gln-40' of host NEDD8, converting it to glutamate, thereby abolishing the activity of cullin-RING-based E3 ubiquitin-protein ligase complexes (CRL complexes). Inactivation of CRL complexes prevents ubiquitination and subsequent degradation of the cyclin-dependent kinase inhibitors CDKN1A/p21 and CDKN1B/p27, leading to G1 and G2 cell cycle arrests in host cells. Also able to catalyze deamidation of 'Gln-40' of host ubiquitin in vitro; however, NEDD8 constitutes the preferred substrate in vivo. The sequence is that of Protein-glutamine deamidase Cif from Yersinia pseudotuberculosis serotype O:3 (strain YPIII).